Consider the following 223-residue polypeptide: Octanoyltransferase (223 aa).

The region spanning 30 to 214 is the BPL/LPL catalytic domain; that stretch reads DLDRDCFLLT…IVADLFGEFT (185 aa). Residues 75-82, 144-146, and 157-159 each bind substrate; these read RGGEITYH, SIG, and GFA. Cysteine 175 acts as the Acyl-thioester intermediate in catalysis.

It belongs to the LipB family.

It localises to the cytoplasm. The catalysed reaction is octanoyl-[ACP] + L-lysyl-[protein] = N(6)-octanoyl-L-lysyl-[protein] + holo-[ACP] + H(+). It functions in the pathway protein modification; protein lipoylation via endogenous pathway; protein N(6)-(lipoyl)lysine from octanoyl-[acyl-carrier-protein]: step 1/2. Catalyzes the transfer of endogenously produced octanoic acid from octanoyl-acyl-carrier-protein onto the lipoyl domains of lipoate-dependent enzymes. Lipoyl-ACP can also act as a substrate although octanoyl-ACP is likely to be the physiological substrate. The sequence is that of Octanoyltransferase from Desulfotalea psychrophila (strain LSv54 / DSM 12343).